Reading from the N-terminus, the 64-residue chain is Large ribosomal subunit protein bL35 (64 aa).

Residues 1 to 23 form a disordered region; that stretch reads MPKMKTHRGAAKRFKKTKNKIKR.

Belongs to the bacterial ribosomal protein bL35 family.

This chain is Large ribosomal subunit protein bL35, found in Nitratiruptor sp. (strain SB155-2).